A 243-amino-acid chain; its full sequence is Venom protease (243 aa).

In terms of domain architecture, Peptidase S1 spans 1–243 (VVGGKPAKLG…DSFILPALKK (243 aa)). C34 and C50 are joined by a disulfide. Catalysis depends on charge relay system residues H49 and D97. 2 cysteine pairs are disulfide-bonded: C165–C178 and C189–C217. The active-site Charge relay system is the S193.

The protein belongs to the peptidase S1 family. Expressed by the venom duct.

The protein resides in the secreted. This is Venom protease from Bombus pensylvanicus (American bumblebee).